Here is a 510-residue protein sequence, read N- to C-terminus: NAD(P)H-quinone oxidoreductase subunit 2, chloroplastic (510 aa).

12 consecutive transmembrane segments (helical) span residues 24–44 (LLLF…GLIL), 59–79 (WFYF…LFRW), 99–119 (IFQF…VEYI), 124–144 (MAIT…MFLC), 149–169 (FITI…LSGY), 183–203 (YLLM…WLYG), 229–249 (ISIA…PAPF), 295–315 (WHLL…LIAI), 323–343 (MLAY…IVGD), 347–367 (GYAS…GTFA), 395–415 (ALSL…AGFF), and 418–438 (LHLF…IGLL).

This sequence belongs to the complex I subunit 2 family. As to quaternary structure, NDH is composed of at least 16 different subunits, 5 of which are encoded in the nucleus.

The protein resides in the plastid. It is found in the chloroplast thylakoid membrane. The catalysed reaction is a plastoquinone + NADH + (n+1) H(+)(in) = a plastoquinol + NAD(+) + n H(+)(out). It catalyses the reaction a plastoquinone + NADPH + (n+1) H(+)(in) = a plastoquinol + NADP(+) + n H(+)(out). NDH shuttles electrons from NAD(P)H:plastoquinone, via FMN and iron-sulfur (Fe-S) centers, to quinones in the photosynthetic chain and possibly in a chloroplast respiratory chain. The immediate electron acceptor for the enzyme in this species is believed to be plastoquinone. Couples the redox reaction to proton translocation, and thus conserves the redox energy in a proton gradient. The chain is NAD(P)H-quinone oxidoreductase subunit 2, chloroplastic from Phormium tenax (New Zealand flax).